We begin with the raw amino-acid sequence, 260 residues long: MTQTNDKLVIAGREFDSRLMVGTGKYADFQQMVRAIEVSGAQIITVAVRRVNISDRSKESLLDHIDLKKYTLLPNTAGCYTAEDAIRTCRLAREAGLSDFVKLEVLGDEKTLYPNNEELLKAAKVLLAEGFTVLPYTSDDPIICKKLEDMGCAAVMPLGAPIGSGLGIRNPYNIQIILESVKVPVIVDAGVGTASDAAIAMELGCHGVLMNTAIAGAKDPVAMAEAMNCAVRAGRLAYLAGRIPRKLYASASSPLAGLIG.

Lys-102 functions as the Schiff-base intermediate with DXP in the catalytic mechanism. 1-deoxy-D-xylulose 5-phosphate-binding positions include Gly-163, 189-190, and 211-212; these read AG and NT.

Belongs to the ThiG family. As to quaternary structure, homotetramer. Forms heterodimers with either ThiH or ThiS.

The protein resides in the cytoplasm. The catalysed reaction is [ThiS sulfur-carrier protein]-C-terminal-Gly-aminoethanethioate + 2-iminoacetate + 1-deoxy-D-xylulose 5-phosphate = [ThiS sulfur-carrier protein]-C-terminal Gly-Gly + 2-[(2R,5Z)-2-carboxy-4-methylthiazol-5(2H)-ylidene]ethyl phosphate + 2 H2O + H(+). Its pathway is cofactor biosynthesis; thiamine diphosphate biosynthesis. Its function is as follows. Catalyzes the rearrangement of 1-deoxy-D-xylulose 5-phosphate (DXP) to produce the thiazole phosphate moiety of thiamine. Sulfur is provided by the thiocarboxylate moiety of the carrier protein ThiS. In vitro, sulfur can be provided by H(2)S. The sequence is that of Thiazole synthase from Citrifermentans bemidjiense (strain ATCC BAA-1014 / DSM 16622 / JCM 12645 / Bem) (Geobacter bemidjiensis).